The chain runs to 379 residues: Protein OSCP1 (379 aa).

As to expression, predominantly expressed in testis.

Its subcellular location is the basal cell membrane. In terms of biological role, may be involved in drug clearance in the placenta. The polypeptide is Protein OSCP1 (Oscp1) (Rattus norvegicus (Rat)).